We begin with the raw amino-acid sequence, 318 residues long: MALENLLHPTNIKIDEYAKNATKFSFEALERGVGYTLGFALKQTMLYSIAGACVTSIKINDGKVTSLEDVIPCDETVADIILNVKSLPVTLAEGVETGTITFELSGSEEEIFSEEAKLSEGLAITEEVFICSYNGGKKLKIEAKVEKGVGFRPAQDNFKDGEFLLDATFSPVVFCDFEIKDARVGRRTDLDKLELNIKTNGNVNCEEALRLAATKIQNQLRNILDIEEINKGIFVEDPTKDINPILLKHVEELNLTARSSNCLKAVNIRLIGELVQKTENELLKAPNFGKKSLTEIKDKLSELGLSLGTLIENWPQDL.

The tract at residues 1-227 (MALENLLHPT…NQLRNILDIE (227 aa)) is alpha N-terminal domain (alpha-NTD). The interval 242-318 (INPILLKHVE…TLIENWPQDL (77 aa)) is alpha C-terminal domain (alpha-CTD).

It belongs to the RNA polymerase alpha chain family. Homodimer. The RNAP catalytic core consists of 2 alpha, 1 beta, 1 beta' and 1 omega subunit. When a sigma factor is associated with the core the holoenzyme is formed, which can initiate transcription.

The enzyme catalyses RNA(n) + a ribonucleoside 5'-triphosphate = RNA(n+1) + diphosphate. Functionally, DNA-dependent RNA polymerase catalyzes the transcription of DNA into RNA using the four ribonucleoside triphosphates as substrates. The polypeptide is DNA-directed RNA polymerase subunit alpha 2 (Francisella tularensis subsp. tularensis (strain FSC 198)).